A 447-amino-acid chain; its full sequence is Probable glycine dehydrogenase (decarboxylating) subunit 1 (447 aa).

The protein belongs to the GcvP family. N-terminal subunit subfamily. In terms of assembly, the glycine cleavage system is composed of four proteins: P, T, L and H. In this organism, the P 'protein' is a heterodimer of two subunits.

It carries out the reaction N(6)-[(R)-lipoyl]-L-lysyl-[glycine-cleavage complex H protein] + glycine + H(+) = N(6)-[(R)-S(8)-aminomethyldihydrolipoyl]-L-lysyl-[glycine-cleavage complex H protein] + CO2. Its function is as follows. The glycine cleavage system catalyzes the degradation of glycine. The P protein binds the alpha-amino group of glycine through its pyridoxal phosphate cofactor; CO(2) is released and the remaining methylamine moiety is then transferred to the lipoamide cofactor of the H protein. In Bacillus cereus (strain AH187), this protein is Probable glycine dehydrogenase (decarboxylating) subunit 1.